The chain runs to 37 residues: Hemocyanin subunit B (37 aa).

The protein belongs to the tyrosinase family. Hemocyanin subfamily. As to expression, hemolymph.

Its subcellular location is the secreted. The protein resides in the extracellular space. Functionally, hemocyanins are copper-containing oxygen carriers occurring freely dissolved in the hemolymph of many mollusks and arthropods. This is Hemocyanin subunit B from Cancer pagurus (Rock crab).